The sequence spans 466 residues: UDP-N-acetylmuramoylalanine--D-glutamate ligase (466 aa).

Residue 121–127 coordinates ATP; it reads GTNGKST.

It belongs to the MurCDEF family.

Its subcellular location is the cytoplasm. The catalysed reaction is UDP-N-acetyl-alpha-D-muramoyl-L-alanine + D-glutamate + ATP = UDP-N-acetyl-alpha-D-muramoyl-L-alanyl-D-glutamate + ADP + phosphate + H(+). It functions in the pathway cell wall biogenesis; peptidoglycan biosynthesis. Functionally, cell wall formation. Catalyzes the addition of glutamate to the nucleotide precursor UDP-N-acetylmuramoyl-L-alanine (UMA). In Mesorhizobium japonicum (strain LMG 29417 / CECT 9101 / MAFF 303099) (Mesorhizobium loti (strain MAFF 303099)), this protein is UDP-N-acetylmuramoylalanine--D-glutamate ligase.